The chain runs to 120 residues: Late histone H2A.2.2 (120 aa).

Basic residues predominate over residues 1–18 (MSGRGKGAKSKSKAKSRS). Residues 1 to 22 (MSGRGKGAKSKSKAKSRSSRAG) form a disordered region. Ser2 is modified (N-acetylserine). The residue at position 2 (Ser2) is a Phosphoserine. Residue Gln104 is modified to N5-methylglutamine. Lys119 is covalently cross-linked (Glycyl lysine isopeptide (Lys-Gly) (interchain with G-Cter in ubiquitin)).

It belongs to the histone H2A family. In terms of assembly, the nucleosome is a histone octamer containing two molecules each of H2A, H2B, H3 and H4 assembled in one H3-H4 heterotetramer and two H2A-H2B heterodimers. The octamer wraps approximately 147 bp of DNA. Monoubiquitination of Lys-119 gives a specific tag for epigenetic transcriptional repression. In terms of processing, phosphorylation of Ser-2 directly represses transcription.

It is found in the nucleus. The protein localises to the chromosome. Its function is as follows. Core component of nucleosome. Nucleosomes wrap and compact DNA into chromatin, limiting DNA accessibility to the cellular machineries which require DNA as a template. Histones thereby play a central role in transcription regulation, DNA repair, DNA replication and chromosomal stability. DNA accessibility is regulated via a complex set of post-translational modifications of histones, also called histone code, and nucleosome remodeling. This Psammechinus miliaris (Green sea urchin) protein is Late histone H2A.2.2.